The chain runs to 240 residues: UDP-2,3-diacylglucosamine hydrolase (240 aa).

Asp-8, His-10, Asp-41, Asn-79, and His-114 together coordinate Mn(2+). 79-80 lines the substrate pocket; it reads NR. The substrate site is built by Asp-122, Ser-160, Asn-164, Lys-167, and His-195. Residues His-195 and His-197 each contribute to the Mn(2+) site.

The protein belongs to the LpxH family. The cofactor is Mn(2+).

It localises to the cell inner membrane. It carries out the reaction UDP-2-N,3-O-bis[(3R)-3-hydroxytetradecanoyl]-alpha-D-glucosamine + H2O = 2-N,3-O-bis[(3R)-3-hydroxytetradecanoyl]-alpha-D-glucosaminyl 1-phosphate + UMP + 2 H(+). It functions in the pathway glycolipid biosynthesis; lipid IV(A) biosynthesis; lipid IV(A) from (3R)-3-hydroxytetradecanoyl-[acyl-carrier-protein] and UDP-N-acetyl-alpha-D-glucosamine: step 4/6. Its function is as follows. Hydrolyzes the pyrophosphate bond of UDP-2,3-diacylglucosamine to yield 2,3-diacylglucosamine 1-phosphate (lipid X) and UMP by catalyzing the attack of water at the alpha-P atom. Involved in the biosynthesis of lipid A, a phosphorylated glycolipid that anchors the lipopolysaccharide to the outer membrane of the cell. In Shigella sonnei (strain Ss046), this protein is UDP-2,3-diacylglucosamine hydrolase.